We begin with the raw amino-acid sequence, 176 residues long: MEKDSQATSSDTSIEKEGVISQSLSKDGIPNQSLSDDHIGIENISVQPSKLYEAVSALRNYGFNYLQCQGGYDEGPGKNLVSFYHFITVDDFQKIEKIKEVRLKVFLKRDSDLSIPSLYEIFKGSDWQERETFDMYGINFIDHPNPKRLLMPEDWRGWPLRKDYIQPDFYELQDAY.

2 stretches are compositionally biased toward polar residues: residues 1–12 (MEKDSQATSSDT) and 20–30 (ISQSLSKDGIP). Positions 1–30 (MEKDSQATSSDTSIEKEGVISQSLSKDGIP) are disordered.

It belongs to the complex I 30 kDa subunit family. In terms of assembly, NDH-1 can be composed of about 15 different subunits; different subcomplexes with different compositions have been identified which probably have different functions.

It is found in the cellular thylakoid membrane. The catalysed reaction is a plastoquinone + NADH + (n+1) H(+)(in) = a plastoquinol + NAD(+) + n H(+)(out). The enzyme catalyses a plastoquinone + NADPH + (n+1) H(+)(in) = a plastoquinol + NADP(+) + n H(+)(out). In terms of biological role, NDH-1 shuttles electrons from an unknown electron donor, via FMN and iron-sulfur (Fe-S) centers, to quinones in the respiratory and/or the photosynthetic chain. The immediate electron acceptor for the enzyme in this species is believed to be plastoquinone. Couples the redox reaction to proton translocation, and thus conserves the redox energy in a proton gradient. Cyanobacterial NDH-1 also plays a role in inorganic carbon-concentration. The chain is NAD(P)H-quinone oxidoreductase subunit J from Prochlorococcus marinus (strain AS9601).